Reading from the N-terminus, the 317-residue chain is D-alanine--D-alanine ligase (317 aa).

The region spanning 103–299 is the ATP-grasp domain; that stretch reads KHIFRSLNID…FNELVKIIIE (197 aa). 130 to 183 lines the ATP pocket; sequence KIDYPYVLKPINEGSSIGVYIIFSHEDYLELKDNSSTIMEKMIVEEYIPGIELH. Mg(2+) contacts are provided by Asp-251, Glu-265, and Asn-267.

This sequence belongs to the D-alanine--D-alanine ligase family. It depends on Mg(2+) as a cofactor. Mn(2+) serves as cofactor.

Its subcellular location is the cytoplasm. It carries out the reaction 2 D-alanine + ATP = D-alanyl-D-alanine + ADP + phosphate + H(+). It participates in cell wall biogenesis; peptidoglycan biosynthesis. Cell wall formation. The polypeptide is D-alanine--D-alanine ligase (Wolbachia sp. subsp. Drosophila simulans (strain wRi)).